We begin with the raw amino-acid sequence, 373 residues long: Deoxyguanosinetriphosphate triphosphohydrolase-like protein 1 (373 aa).

Positions 21–43 (RSSEARRAVPEAPSETRTAYQKD) are disordered. Residues 76 to 198 (RLTHTLEVQQ…VDAADALAYT (123 aa)) enclose the HD domain.

This sequence belongs to the dGTPase family. Type 2 subfamily.

This is Deoxyguanosinetriphosphate triphosphohydrolase-like protein 1 from Deinococcus radiodurans (strain ATCC 13939 / DSM 20539 / JCM 16871 / CCUG 27074 / LMG 4051 / NBRC 15346 / NCIMB 9279 / VKM B-1422 / R1).